The sequence spans 382 residues: Plasmid replication initiator protein TrfA (382 aa).

Residues 1 to 163 are toxic in E.coli strain K12 / DH5-alpha; may be membrane-associated; sequence MNRTFDRKAY…TARSALFTTR (163 aa). A DNA-binding region (H-T-H motif) is located at residues 246 to 265; it reads SRLQATAMGFTSDRVGHLES. The tract at residues 286-297 is hydrophobic region (HR); required for membrane association; it reads VLIDEEIVVLFA.

As to quaternary structure, forms a dimer in solution, binds DNA as a monomer. Both mononer and dimer of the short form interact with Hda (Dp).

The protein localises to the cell inner membrane. In terms of biological role, required for initiation of plasmid DNA replication, along with host-derived DnaA and other host proteins. Both forms of the protein are capable of initiating plasmid replication in a number of Gram-negative bacteria. Binds to 8 17-base pair repeat sequences (iterons) in the RK2 minimal replication origin (oriV), opening the origin of replication. oriV opening does not absolutely require the presence of nucleotides; formation of open complex is somewhat enhanced by ATP or ATP gamma S, while DnaA or HU is required for full opening. Its function is as follows. Also involved in plasmid copy number control, promoting intermolecular coupling of protein bound iterons at oriV, which inhibits replication initiation. The chain is Plasmid replication initiator protein TrfA (trfA) from Escherichia coli.